A 55-amino-acid chain; its full sequence is U17-myrmicitoxin-Mri1b (55 aa).

Residues 1–31 form the signal peptide; the sequence is MENSRTSTFTAYVTVAFLLISTFVTMVVTES. Pyrrolidone carboxylic acid is present on Gln-32.

Post-translationally, contains 1 disulfide bond. As to expression, expressed by the venom gland.

The protein localises to the secreted. The sequence is that of U17-myrmicitoxin-Mri1b from Manica rubida (European giant red ant).